Reading from the N-terminus, the 1463-residue chain is DNA polymerase III PolC-type (1463 aa).

Positions 425-581 (YVVFDVETTG…YDAEATGRLL (157 aa)) constitute an Exonuclease domain.

It belongs to the DNA polymerase type-C family. PolC subfamily.

It localises to the cytoplasm. The enzyme catalyses DNA(n) + a 2'-deoxyribonucleoside 5'-triphosphate = DNA(n+1) + diphosphate. Functionally, required for replicative DNA synthesis. This DNA polymerase also exhibits 3' to 5' exonuclease activity. The protein is DNA polymerase III PolC-type of Streptococcus suis (strain 98HAH33).